Reading from the N-terminus, the 225-residue chain is Methylthioribulose-1-phosphate dehydratase (225 aa).

The Zn(2+) site is built by H106 and H108.

It belongs to the aldolase class II family. MtnB subfamily. It depends on Zn(2+) as a cofactor.

It catalyses the reaction 5-(methylsulfanyl)-D-ribulose 1-phosphate = 5-methylsulfanyl-2,3-dioxopentyl phosphate + H2O. It participates in amino-acid biosynthesis; L-methionine biosynthesis via salvage pathway; L-methionine from S-methyl-5-thio-alpha-D-ribose 1-phosphate: step 2/6. In terms of biological role, catalyzes the dehydration of methylthioribulose-1-phosphate (MTRu-1-P) into 2,3-diketo-5-methylthiopentyl-1-phosphate (DK-MTP-1-P). The polypeptide is Methylthioribulose-1-phosphate dehydratase (Xanthomonas oryzae pv. oryzae (strain MAFF 311018)).